Here is a 1160-residue protein sequence, read N- to C-terminus: Transcription factor tau 138 kDa subunit (1160 aa).

The tract at residues 475–533 (PNSKKTPNKNKRKRQVKNSTNASVAGNISNPKRIKLEQHVSTAQEPKSAEDSPSSNGGT) is disordered. Residues 480–490 (TPNKNKRKRQV) show a composition bias toward basic residues. 2 stretches are compositionally biased toward polar residues: residues 491-504 (KNST…NISN) and 513-529 (HVST…SPSS). A Phosphoserine modification is found at Ser-546.

In terms of assembly, component of the TFIIIC complex composed of TFC1, TFC3, TFC4, TFC6, TFC7 and TFC8. The subunits are organized in two globular domains, tauA and tauB, connected by a proteolysis-sensitive and flexible linker. Interacts with TFC1, TFC4 and TFC6.

The protein resides in the nucleus. Its subcellular location is the mitochondrion. Functionally, TFIIIC mediates tRNA and 5S RNA gene activation by binding to intragenic promoter elements. Upstream of the transcription start site, TFIIIC assembles the initiation complex TFIIIB-TFIIIC-tDNA, which is sufficient for RNA polymerase III recruitment and function. Part of the tauB domain of TFIIIC that binds boxB DNA promoter sites of tRNA and similar genes. TFC3 is essential for cell viability. Cooperates with TFC6 in DNA binding. The polypeptide is Transcription factor tau 138 kDa subunit (TFC3) (Saccharomyces cerevisiae (strain ATCC 204508 / S288c) (Baker's yeast)).